The sequence spans 140 residues: Nucleoside diphosphate kinase (140 aa).

ATP contacts are provided by lysine 11, phenylalanine 59, arginine 87, threonine 93, arginine 104, and asparagine 114. Histidine 117 (pros-phosphohistidine intermediate) is an active-site residue.

Belongs to the NDK family. Homotetramer. Requires Mg(2+) as cofactor.

The protein resides in the cytoplasm. The enzyme catalyses a 2'-deoxyribonucleoside 5'-diphosphate + ATP = a 2'-deoxyribonucleoside 5'-triphosphate + ADP. It carries out the reaction a ribonucleoside 5'-diphosphate + ATP = a ribonucleoside 5'-triphosphate + ADP. Major role in the synthesis of nucleoside triphosphates other than ATP. The ATP gamma phosphate is transferred to the NDP beta phosphate via a ping-pong mechanism, using a phosphorylated active-site intermediate. The chain is Nucleoside diphosphate kinase from Rhizobium rhizogenes (strain K84 / ATCC BAA-868) (Agrobacterium radiobacter).